Reading from the N-terminus, the 371-residue chain is tRNA-specific 2-thiouridylase MnmA (371 aa).

ATP contacts are provided by residues 14-21 (GMSGGVDS) and Met40. The interaction with target base in tRNA stretch occupies residues 100-102 (NPD). Residue Cys105 is the Nucleophile of the active site. Cys105 and Cys205 are disulfide-bonded. Gly129 contacts ATP. Residues 155–157 (KDQ) form an interaction with tRNA region. Catalysis depends on Cys205, which acts as the Cysteine persulfide intermediate. The tract at residues 321-322 (RY) is interaction with tRNA.

Belongs to the MnmA/TRMU family.

The protein resides in the cytoplasm. It carries out the reaction S-sulfanyl-L-cysteinyl-[protein] + uridine(34) in tRNA + AH2 + ATP = 2-thiouridine(34) in tRNA + L-cysteinyl-[protein] + A + AMP + diphosphate + H(+). In terms of biological role, catalyzes the 2-thiolation of uridine at the wobble position (U34) of tRNA, leading to the formation of s(2)U34. The protein is tRNA-specific 2-thiouridylase MnmA of Bordetella parapertussis (strain 12822 / ATCC BAA-587 / NCTC 13253).